We begin with the raw amino-acid sequence, 187 residues long: Threonylcarbamoyl-AMP synthase (187 aa).

The 184-residue stretch at 4–187 (TPDLDAAVAT…DARTGQILRD (184 aa)) folds into the YrdC-like domain.

Belongs to the SUA5 family. TsaC subfamily.

It is found in the cytoplasm. The enzyme catalyses L-threonine + hydrogencarbonate + ATP = L-threonylcarbamoyladenylate + diphosphate + H2O. In terms of biological role, required for the formation of a threonylcarbamoyl group on adenosine at position 37 (t(6)A37) in tRNAs that read codons beginning with adenine. Catalyzes the conversion of L-threonine, HCO(3)(-)/CO(2) and ATP to give threonylcarbamoyl-AMP (TC-AMP) as the acyladenylate intermediate, with the release of diphosphate. The sequence is that of Threonylcarbamoyl-AMP synthase from Xanthomonas campestris pv. campestris (strain 8004).